The sequence spans 515 residues: Thioredoxin domain-containing protein 2 (515 aa).

The interval 1 to 23 is disordered; the sequence is MTLNNGGKANERGSNENPLQALS. Phosphoserine occurs at positions 14 and 39. Residues 51–390 are disordered; that stretch reads TLHMSTEESE…NTIKSSEEDV (340 aa). Composition is skewed to polar residues over residues 61 to 75 and 85 to 136; these read FPQQVSSTPMFSENT and KPSS…TNST. Tandem repeats lie at residues 92 to 106, 107 to 121, 122 to 136, 137 to 151, 152 to 166, 167 to 181, 182 to 196, 197 to 211, 212 to 226, 227 to 241, 242 to 256, 257 to 271, 272 to 286, 287 to 301, 302 to 316, 317 to 331, 332 to 346, 347 to 362, 363 to 375, 376 to 390, and 391 to 405. A 21 X 15 AA approximate tandem repeat of Q-P-K-X-G-D-I-P-K-S-[PS]-E-[KE]-X-I region spans residues 92–405; that stretch reads QLKQENISKS…KLLGLGAEIE (314 aa). Basic and acidic residues-rich tracts occupy residues 137–293 and 302–358; these read HYRE…ETKV and QSKE…KSPE. S146 is modified (phosphoserine). Residues 375 to 384 show a composition bias toward polar residues; that stretch reads IQSQEGNTIK. The Thioredoxin domain occupies 398–515; it reads LGLGAEIETL…KLERSISELK (118 aa). The cysteines at positions 442 and 445 are disulfide-linked.

Testis-specific. Strongly expressed in the testicular seminiferous tubules, mostly in the round spermatids.

The protein localises to the cytoplasm. Its function is as follows. Probably plays a regulatory role in sperm development. May participate in regulation of fibrous sheath (FS) assembly by supporting the formation of disulfide bonds during sperm tail morphogenesis. May also be required to rectify incorrect disulfide pairing and generate suitable pairs between the FS constituents. Can reduce disulfide bonds in vitro in the presence of NADP and thioredoxin reductase. In Mus musculus (Mouse), this protein is Thioredoxin domain-containing protein 2 (Txndc2).